Reading from the N-terminus, the 386-residue chain is MAYFKAVAYLAALASAAAFNPGSSFVPRLNAPATQPKAAKMTGPTMQAVPCGINGFGRIGRLVARIMIKDPETKLLQVNAGSATPDYMAYQFKYDSIHGRYQGDVVVDGDDLVIDGQRVITTRARDPKDIGWAKTGVEYLCESTGVFLTAEKAQPHIDAGVKKVIFSAPAKDDSLTVVMGVNAEDYKGQTDFISCASCTTNGLAPLVKCINDKWGIEEGLMTTIHAMTATQAVVDSSSRKDWRGGRAASGNIIPSSTGAAKAVAKVIPAVKGKLTGMAFRVPTIDVSVVDLTCRLAKDATYEEICAEVKRRANGDMKGFLGYTDEPLVSTDFETEPISSTFDAEAGISLNPRFVKLVAWYDNEWGYSNRVKDLMVHVAKVDAKVKA.

The N-terminal 45 residues, 1-45 (MAYFKAVAYLAALASAAAFNPGSSFVPRLNAPATQPKAAKMTGPT), are a transit peptide targeting the chloroplast. Residues 58–59 (RI) and Arg-125 each bind NADP(+). D-glyceraldehyde 3-phosphate is bound by residues 197–199 (SCT), Thr-228, 257–258 (TG), and Arg-280. The Nucleophile role is filled by Cys-198. Asn-362 provides a ligand contact to NADP(+).

This sequence belongs to the glyceraldehyde-3-phosphate dehydrogenase family. In terms of assembly, homotetramer.

It localises to the plastid. It is found in the chloroplast. The enzyme catalyses D-glyceraldehyde 3-phosphate + phosphate + NADP(+) = (2R)-3-phospho-glyceroyl phosphate + NADPH + H(+). It carries out the reaction D-glyceraldehyde 3-phosphate + phosphate + NAD(+) = (2R)-3-phospho-glyceroyl phosphate + NADH + H(+). It functions in the pathway carbohydrate biosynthesis; Calvin cycle. The polypeptide is Glyceraldehyde-3-phosphate dehydrogenase, chloroplastic (GAPC1) (Guillardia theta (Cryptophyte)).